The sequence spans 389 residues: Chalcone synthase 6 (389 aa).

Cys164 is a catalytic residue.

The protein belongs to the thiolase-like superfamily. Chalcone/stilbene synthases family.

The catalysed reaction is (E)-4-coumaroyl-CoA + 3 malonyl-CoA + 3 H(+) = 2',4,4',6'-tetrahydroxychalcone + 3 CO2 + 4 CoA. Its pathway is secondary metabolite biosynthesis; flavonoid biosynthesis. Its function is as follows. The primary product of this enzyme is 4,2',4',6'-tetrahydroxychalcone (also termed naringenin-chalcone or chalcone) which can under specific conditions spontaneously isomerize into naringenin. This Pisum sativum (Garden pea) protein is Chalcone synthase 6 (CHS6).